The primary structure comprises 341 residues: Elongation factor Ts (341 aa).

An involved in Mg(2+) ion dislocation from EF-Tu region spans residues 80–83 (TDFV).

This sequence belongs to the EF-Ts family.

The protein localises to the cytoplasm. In terms of biological role, associates with the EF-Tu.GDP complex and induces the exchange of GDP to GTP. It remains bound to the aminoacyl-tRNA.EF-Tu.GTP complex up to the GTP hydrolysis stage on the ribosome. The chain is Elongation factor Ts from Lactobacillus acidophilus (strain ATCC 700396 / NCK56 / N2 / NCFM).